A 301-amino-acid chain; its full sequence is Uricase-2 isozyme 2 (301 aa).

Catalysis depends on charge relay system residues lysine 17 and threonine 63. Residues threonine 63, aspartate 64, phenylalanine 165, arginine 182, valine 237, glutamine 238, and asparagine 257 each contribute to the urate site. Histidine 259 (charge relay system) is an active-site residue. Positions 299–301 (SKL) match the Microbody targeting signal motif.

This sequence belongs to the uricase family.

It is found in the peroxisome. It catalyses the reaction urate + O2 + H2O = 5-hydroxyisourate + H2O2. It participates in purine metabolism; urate degradation; (S)-allantoin from urate: step 1/3. In terms of biological role, catalyzes the oxidation of uric acid to 5-hydroxyisourate, which is further processed to form (S)-allantoin. This is Uricase-2 isozyme 2 from Canavalia lineata (Beach bean).